We begin with the raw amino-acid sequence, 133 residues long: L-ectoine synthase (133 aa).

Belongs to the ectoine synthase family.

The catalysed reaction is (2S)-4-acetamido-2-aminobutanoate = L-ectoine + H2O. It functions in the pathway amine and polyamine biosynthesis; ectoine biosynthesis; L-ectoine from L-aspartate 4-semialdehyde: step 3/3. Catalyzes the circularization of gamma-N-acetyl-alpha,gamma-diaminobutyric acid (ADABA) to ectoine (1,4,5,6-tetrahydro-2-methyl-4-pyrimidine carboxylic acid), which is an excellent osmoprotectant. The protein is L-ectoine synthase of Bordetella petrii (strain ATCC BAA-461 / DSM 12804 / CCUG 43448).